Here is a 35-residue protein sequence, read N- to C-terminus: NEVCPPGRCEPYCCDPRKCKCLSIDFYGLVCNCDS.

Post-translationally, contains 4 disulfide bonds. Expressed by the venom duct.

The protein localises to the secreted. This chain is Augerpeptide hheTx5, found in Hastula hectica (Sea snail).